We begin with the raw amino-acid sequence, 786 residues long: Endonuclease MutS2 (786 aa).

Position 335-342 (335-342 (GPNTGGKT)) interacts with ATP. A Smr domain is found at 711-786 (LDLRGERFEN…GLGVTVVELK (76 aa)).

The protein belongs to the DNA mismatch repair MutS family. MutS2 subfamily. As to quaternary structure, homodimer. Binds to stalled ribosomes, contacting rRNA.

Functionally, endonuclease that is involved in the suppression of homologous recombination and thus may have a key role in the control of bacterial genetic diversity. Acts as a ribosome collision sensor, splitting the ribosome into its 2 subunits. Detects stalled/collided 70S ribosomes which it binds and splits by an ATP-hydrolysis driven conformational change. Acts upstream of the ribosome quality control system (RQC), a ribosome-associated complex that mediates the extraction of incompletely synthesized nascent chains from stalled ribosomes and their subsequent degradation. Probably generates substrates for RQC. The sequence is that of Endonuclease MutS2 from Bacillus cereus (strain ATCC 10987 / NRS 248).